A 166-amino-acid chain; its full sequence is Regulatory protein RecX (166 aa).

It belongs to the RecX family.

It localises to the cytoplasm. Modulates RecA activity. The protein is Regulatory protein RecX of Salmonella agona (strain SL483).